The sequence spans 419 residues: UDP-N-acetylglucosamine 1-carboxyvinyltransferase (419 aa).

22–23 (KN) contributes to the phosphoenolpyruvate binding site. Arg-93 provides a ligand contact to UDP-N-acetyl-alpha-D-glucosamine. Catalysis depends on Cys-117, which acts as the Proton donor. Cys-117 bears the 2-(S-cysteinyl)pyruvic acid O-phosphothioketal mark. UDP-N-acetyl-alpha-D-glucosamine is bound by residues Asp-306 and Val-328.

The protein belongs to the EPSP synthase family. MurA subfamily.

Its subcellular location is the cytoplasm. It carries out the reaction phosphoenolpyruvate + UDP-N-acetyl-alpha-D-glucosamine = UDP-N-acetyl-3-O-(1-carboxyvinyl)-alpha-D-glucosamine + phosphate. It participates in cell wall biogenesis; peptidoglycan biosynthesis. Functionally, cell wall formation. Adds enolpyruvyl to UDP-N-acetylglucosamine. The polypeptide is UDP-N-acetylglucosamine 1-carboxyvinyltransferase (Thioalkalivibrio sulfidiphilus (strain HL-EbGR7)).